The sequence spans 698 residues: UvrABC system protein B (698 aa).

The Helicase ATP-binding domain occupies 28–414 (RRILAGERDV…SGGEFVEQVI (387 aa)). 41–48 (GATGTGKS) is a binding site for ATP. A Beta-hairpin motif is present at residues 94–117 (YYDYYQPEAYIAQTDTYIEKDSSI). The region spanning 432–598 (QIDDLIGEIR…PLRKKIADIL (167 aa)) is the Helicase C-terminal domain. A disordered region spans residues 609-629 (DTVQVGGSGRNVSRGRRAQSE). The UVR domain maps to 653–688 (ADLIKDLTAQMMAAASDLQFELAARFRDEIADLKKE).

The protein belongs to the UvrB family. Forms a heterotetramer with UvrA during the search for lesions. Interacts with UvrC in an incision complex.

It is found in the cytoplasm. In terms of biological role, the UvrABC repair system catalyzes the recognition and processing of DNA lesions. A damage recognition complex composed of 2 UvrA and 2 UvrB subunits scans DNA for abnormalities. Upon binding of the UvrA(2)B(2) complex to a putative damaged site, the DNA wraps around one UvrB monomer. DNA wrap is dependent on ATP binding by UvrB and probably causes local melting of the DNA helix, facilitating insertion of UvrB beta-hairpin between the DNA strands. Then UvrB probes one DNA strand for the presence of a lesion. If a lesion is found the UvrA subunits dissociate and the UvrB-DNA preincision complex is formed. This complex is subsequently bound by UvrC and the second UvrB is released. If no lesion is found, the DNA wraps around the other UvrB subunit that will check the other stand for damage. The protein is UvrABC system protein B of Mycobacterium leprae (strain TN).